A 293-amino-acid chain; its full sequence is Acetyl-coenzyme A carboxylase carboxyl transferase subunit beta (293 aa).

The CoA carboxyltransferase N-terminal domain maps to 29–293 (LWRKCPRCEG…MGWPPLALDD (265 aa)). Residues Cys-33, Cys-36, Cys-52, and Cys-55 each coordinate Zn(2+). A C4-type zinc finger spans residues 33 to 55 (CPRCEGVVYRPELDRNMDVCPKC).

This sequence belongs to the AccD/PCCB family. Acetyl-CoA carboxylase is a heterohexamer composed of biotin carboxyl carrier protein (AccB), biotin carboxylase (AccC) and two subunits each of ACCase subunit alpha (AccA) and ACCase subunit beta (AccD). Requires Zn(2+) as cofactor.

The protein resides in the cytoplasm. The enzyme catalyses N(6)-carboxybiotinyl-L-lysyl-[protein] + acetyl-CoA = N(6)-biotinyl-L-lysyl-[protein] + malonyl-CoA. It participates in lipid metabolism; malonyl-CoA biosynthesis; malonyl-CoA from acetyl-CoA: step 1/1. Functionally, component of the acetyl coenzyme A carboxylase (ACC) complex. Biotin carboxylase (BC) catalyzes the carboxylation of biotin on its carrier protein (BCCP) and then the CO(2) group is transferred by the transcarboxylase to acetyl-CoA to form malonyl-CoA. This chain is Acetyl-coenzyme A carboxylase carboxyl transferase subunit beta, found in Alcanivorax borkumensis (strain ATCC 700651 / DSM 11573 / NCIMB 13689 / SK2).